Here is a 547-residue protein sequence, read N- to C-terminus: Sterol carrier protein 2 (547 aa).

Phosphoserine occurs at positions 3 and 8. Lys40 carries the N6-succinyllysine modification. N6-acetyllysine; alternate is present on Lys132. Lys132 carries the post-translational modification N6-succinyllysine; alternate. Position 168 is an N6-succinyllysine (Lys168). N6-acetyllysine is present on Lys177. N6-acetyllysine; alternate is present on Lys183. N6-succinyllysine; alternate is present on Lys183. 2 positions are modified to N6-succinyllysine: Lys211 and Lys282. Lys341, Lys432, Lys438, Lys443, and Lys453 each carry N6-acetyllysine; alternate. An N6-succinyllysine; alternate mark is found at Lys341, Lys432, Lys438, Lys443, and Lys453. Residues 433–543 enclose the SCP2 domain; that stretch reads ANLIFKEIEK…KLQSLQLQPD (111 aa). Position 464 is an N6-succinyllysine (Lys464). An N6-acetyllysine; alternate modification is found at Lys470. Lys470 carries the post-translational modification N6-succinyllysine; alternate. Lys479 is subject to N6-succinyllysine. Lys491 is modified (N6-acetyllysine). Lys492 and Lys511 each carry N6-succinyllysine. Ser516 is subject to Phosphoserine. An N6-succinyllysine mark is found at Lys522 and Lys534. Ser537 carries the phosphoserine modification. Lys544 bears the N6-succinyllysine mark. Residues 545 to 547 carry the Microbody targeting signal motif; that stretch reads AKL.

In the N-terminal section; belongs to the thiolase-like superfamily. Thiolase family. In terms of assembly, interacts with PEX5; the interaction is essential for peroxisomal import. In terms of processing, preSCP2, a protein with a molecular mass of about 15 kDa, is processed into its mature form (SCP2) by proteolytic cleavage of a 20 residue leader sequence after translocation into peroxisomes. Liver &gt; intestine &gt; brain &gt; lung, colon, stomach, spleen, kidney, heart and ovary. In terms of tissue distribution, expressed in liver (at protein level).

The protein localises to the peroxisome. Its subcellular location is the cytoplasm. It is found in the mitochondrion. It carries out the reaction an acyl-CoA + acetyl-CoA = a 3-oxoacyl-CoA + CoA. The enzyme catalyses choloyl-CoA + propanoyl-CoA = 3alpha,7alpha,12alpha-trihydroxy-24-oxo-5beta-cholestan-26-oyl-CoA + CoA. The catalysed reaction is 4,8,12-trimethyltridecanoyl-CoA + propanoyl-CoA = 3-oxopristanoyl-CoA + CoA. It catalyses the reaction hexanoyl-CoA + acetyl-CoA = 3-oxooctanoyl-CoA + CoA. It carries out the reaction tetradecanoyl-CoA + acetyl-CoA = 3-oxohexadecanoyl-CoA + CoA. The enzyme catalyses 3-oxohexadecanedioyl-CoA + CoA = tetradecanedioyl-CoA + acetyl-CoA. The catalysed reaction is propanoyl-CoA + tetradecanoyl-CoA = 3-oxo-2-methylhexadecanoyl-CoA + CoA. It catalyses the reaction butanoyl-CoA + acetyl-CoA = 3-oxohexanoyl-CoA + CoA. It carries out the reaction octanoyl-CoA + acetyl-CoA = 3-oxodecanoyl-CoA + CoA. The enzyme catalyses decanoyl-CoA + acetyl-CoA = 3-oxododecanoyl-CoA + CoA. The catalysed reaction is dodecanoyl-CoA + acetyl-CoA = 3-oxotetradecanoyl-CoA + CoA. It catalyses the reaction hexadecanoyl-CoA + acetyl-CoA = 3-oxooctadecanoyl-CoA + CoA. It carries out the reaction 3-oxo-(9Z-octadecenoyl)-CoA + CoA = (7Z)-hexadecenoyl-CoA + acetyl-CoA. The enzyme catalyses 7-dehydrocholesterol(in) = 7-dehydrocholesterol(out). Functionally, plays a crucial role in the peroxisomal oxidation of branched-chain fatty acids. Catalyzes the last step of the peroxisomal beta-oxidation of branched chain fatty acids and the side chain of the bile acid intermediates di- and trihydroxycoprostanic acids (DHCA and THCA). Also active with medium and long straight chain 3-oxoacyl-CoAs. Stimulates the microsomal conversion of 7-dehydrocholesterol to cholesterol and transfers phosphatidylcholine and 7-dehydrocholesterol between membrances, in vitro. Isoforms SCP2 and SCPx cooperate in peroxisomal oxidation of certain naturally occurring tetramethyl-branched fatty acyl-CoAs. Its function is as follows. Mediates the transfer of all common phospholipids, cholesterol and gangliosides from the endoplasmic reticulum to the plasma membrane. May play a role in regulating steroidogenesis. Stimulates the microsomal conversion of 7-dehydrocholesterol to cholesterol. Also binds fatty acids and fatty acyl Coenzyme A (CoA) such as phytanoyl-CoA. Involved in the regulation phospholipid synthesis in endoplasmic reticulum enhancing the incorporation of exogenous fatty acid into glycerides. Seems to stimulate the rate-limiting step in phosphatidic acid formation mediated by GPAT3. Isoforms SCP2 and SCPx cooperate in peroxisomal oxidation of certain naturally occurring tetramethyl-branched fatty acyl-CoAs. The chain is Sterol carrier protein 2 from Rattus norvegicus (Rat).